The sequence spans 637 residues: Threonine--tRNA ligase (637 aa).

Positions 1 to 61 (MIKITLKDGK…NEDSTLEILT (61 aa)) constitute a TGS domain. Positions 242–532 (DHRKLGKELG…LTEHYAGAFP (291 aa)) are catalytic. Residues Cys-333, His-384, and His-509 each coordinate Zn(2+).

Belongs to the class-II aminoacyl-tRNA synthetase family. Homodimer. It depends on Zn(2+) as a cofactor.

The protein localises to the cytoplasm. The catalysed reaction is tRNA(Thr) + L-threonine + ATP = L-threonyl-tRNA(Thr) + AMP + diphosphate + H(+). Catalyzes the attachment of threonine to tRNA(Thr) in a two-step reaction: L-threonine is first activated by ATP to form Thr-AMP and then transferred to the acceptor end of tRNA(Thr). Also edits incorrectly charged L-seryl-tRNA(Thr). This is Threonine--tRNA ligase from Clostridium novyi (strain NT).